A 226-amino-acid polypeptide reads, in one-letter code: UPF0173 metal-dependent hydrolase GTNG_2675 (226 aa).

This sequence belongs to the UPF0173 family.

This chain is UPF0173 metal-dependent hydrolase GTNG_2675, found in Geobacillus thermodenitrificans (strain NG80-2).